Reading from the N-terminus, the 235-residue chain is Sugar fermentation stimulation protein homolog (235 aa).

This sequence belongs to the SfsA family.

This Photorhabdus laumondii subsp. laumondii (strain DSM 15139 / CIP 105565 / TT01) (Photorhabdus luminescens subsp. laumondii) protein is Sugar fermentation stimulation protein homolog.